Here is a 305-residue protein sequence, read N- to C-terminus: Homoserine O-acetyltransferase (305 aa).

The active-site Acyl-thioester intermediate is Cys142. Positions 163 and 192 each coordinate substrate. Residue His235 is the Proton acceptor of the active site. The active site involves Glu237. Arg249 contacts substrate.

The protein belongs to the MetA family.

It is found in the cytoplasm. The enzyme catalyses L-homoserine + acetyl-CoA = O-acetyl-L-homoserine + CoA. It functions in the pathway amino-acid biosynthesis; L-methionine biosynthesis via de novo pathway; O-acetyl-L-homoserine from L-homoserine: step 1/1. In terms of biological role, transfers an acetyl group from acetyl-CoA to L-homoserine, forming acetyl-L-homoserine. The protein is Homoserine O-acetyltransferase of Bacteroides fragilis (strain ATCC 25285 / DSM 2151 / CCUG 4856 / JCM 11019 / LMG 10263 / NCTC 9343 / Onslow / VPI 2553 / EN-2).